Here is a 98-residue protein sequence, read N- to C-terminus: NADH-ubiquinone oxidoreductase chain 4L (98 aa).

The next 3 membrane-spanning stretches (helical) occupy residues 1-21 (MALTYMNMALAFTVSLLGLLM), 29-49 (SLLCLEGMMLSLFVTMSLTIL), and 61-81 (IILLVFAACEAALGLSLLVMV).

Belongs to the complex I subunit 4L family. Core subunit of respiratory chain NADH dehydrogenase (Complex I) which is composed of 45 different subunits.

Its subcellular location is the mitochondrion inner membrane. It carries out the reaction a ubiquinone + NADH + 5 H(+)(in) = a ubiquinol + NAD(+) + 4 H(+)(out). Its function is as follows. Core subunit of the mitochondrial membrane respiratory chain NADH dehydrogenase (Complex I) which catalyzes electron transfer from NADH through the respiratory chain, using ubiquinone as an electron acceptor. Part of the enzyme membrane arm which is embedded in the lipid bilayer and involved in proton translocation. This Pteropus dasymallus (Ryukyu flying fox) protein is NADH-ubiquinone oxidoreductase chain 4L (MT-ND4L).